A 356-amino-acid chain; its full sequence is Alpha-N-acetylneuraminide alpha-2,8-sialyltransferase (356 aa).

Residues 1-29 (MSPCGRARRHTSRGAMAVLAWKFPRTRLP) are Cytoplasmic-facing. A helical; Signal-anchor for type II membrane protein transmembrane segment spans residues 30–48 (VGASALCVVVLCWLYVFPV). Residues 49–356 (YRLPDEKEIV…CEDNSLQPTS (308 aa)) are Lumenal-facing. Residues Asn71 and Asn119 are each glycosylated (N-linked (GlcNAc...) asparagine). Cys138 and Cys287 are joined by a disulfide. The CMP-N-acetyl-beta-neuraminate site is built by Asn143 and Asn166. Residues Asn214 and Asn245 are each glycosylated (N-linked (GlcNAc...) asparagine). CMP-N-acetyl-beta-neuraminate contacts are provided by Ser274, Thr275, Gly276, Trp296, and His310.

This sequence belongs to the glycosyltransferase 29 family.

The protein resides in the golgi apparatus membrane. The catalysed reaction is an N-acetyl-alpha-neuraminyl-(2-&gt;3)-beta-D-galactosyl derivative + CMP-N-acetyl-beta-neuraminate = an N-acetyl-alpha-neuraminyl-(2-&gt;8)-N-acetyl-alpha-neuraminyl-(2-&gt;3)-beta-D-galactosyl derivative + CMP + H(+). It catalyses the reaction a ganglioside GM3 (d18:1(4E)) + CMP-N-acetyl-beta-neuraminate = a ganglioside GD3 (d18:1(4E)) + CMP + H(+). The enzyme catalyses a ganglioside GD3 (d18:1(4E)) + CMP-N-acetyl-beta-neuraminate = a ganglioside GT3 (d18:1(4E)) + CMP + H(+). It carries out the reaction a ganglioside GD1a (d18:1(4E)) + CMP-N-acetyl-beta-neuraminate = a ganglioside GT1a (d18:1(4E)) + CMP + H(+). The catalysed reaction is a ganglioside GT1b (d18:1(4E)) + CMP-N-acetyl-beta-neuraminate = a ganglioside GQ1b (d18:1(4E)) + CMP + H(+). It catalyses the reaction a ganglioside GM1b (d18:1(4E)) + CMP-N-acetyl-beta-neuraminate = a ganglioside GD1c (d18:1(4E)) + CMP + H(+). The enzyme catalyses a ganglioside GD3 + CMP-N-acetyl-beta-neuraminate = a ganglioside GT3 + CMP + H(+). It carries out the reaction [alpha-N-acetylneuraminyl-(2-&gt;8)](n)-alpha-N-acetylneuraminyl-(2-&gt;8)-alpha-N-acetylneuraminyl-(2-&gt;3)-beta-D-galactosyl-(1-&gt;4)-beta-D-glucosyl-(1&lt;-&gt;1)-ceramide + CMP-N-acetyl-beta-neuraminate = [alpha-N-acetylneuraminyl-(2-&gt;8)](n+1)-alpha-N-acetylneuraminyl-(2-&gt;8)-alpha-N-acetylneuraminyl-(2-&gt;3)-beta-D-galactosyl-(1-&gt;4)-beta-D-glucosyl-(1&lt;-&gt;1)-ceramide + CMP + H(+). The protein operates within protein modification; protein glycosylation. Its pathway is lipid metabolism; sphingolipid metabolism. Functionally, catalyzes the addition of sialic acid in alpha 2,8-linkage to the sialic acid moiety of the ganglioside GM3 to form ganglioside GD3; gangliosides are a subfamily of complex glycosphingolipds that contain one or more residues of sialic acid. Can catalyze the addition of a second alpha-2,8- sialic acid to GD3 to form GT3. Can use GM1b, GD1a and GT1b as acceptor substrates to synthesize GD1c, GT1a and GQ1b respectively. This is Alpha-N-acetylneuraminide alpha-2,8-sialyltransferase from Bos taurus (Bovine).